The sequence spans 681 residues: DNA-directed RNA polymerase subunit beta' (681 aa).

Zn(2+) contacts are provided by Cys69, Cys71, Cys87, and Cys90. Mg(2+) contacts are provided by Asp489, Asp491, and Asp493.

This sequence belongs to the RNA polymerase beta' chain family. RpoC1 subfamily. In terms of assembly, in plastids the minimal PEP RNA polymerase catalytic core is composed of four subunits: alpha, beta, beta', and beta''. When a (nuclear-encoded) sigma factor is associated with the core the holoenzyme is formed, which can initiate transcription. Requires Mg(2+) as cofactor. Zn(2+) serves as cofactor.

Its subcellular location is the plastid. It localises to the chloroplast. It catalyses the reaction RNA(n) + a ribonucleoside 5'-triphosphate = RNA(n+1) + diphosphate. In terms of biological role, DNA-dependent RNA polymerase catalyzes the transcription of DNA into RNA using the four ribonucleoside triphosphates as substrates. This is DNA-directed RNA polymerase subunit beta' from Atropa belladonna (Belladonna).